A 222-amino-acid chain; its full sequence is MIF4G domain-containing protein B (222 aa).

The MIF4G domain occupies 3–205 (NSSKEDYKIQ…LEILEFRAGG (203 aa)).

It belongs to the MIF4GD family. In terms of assembly, interacts with eif4g1, eif4g2 and slbp; probably tethered by SLBP to the 3'-end of mRNAs ending with the histone stem-loop, it also interacts with eif4g1 which is bound to their 5'-end.

The protein localises to the cytoplasm. The protein resides in the nucleus. In terms of biological role, functions in replication-dependent translation of histone mRNAs which differ from other eukaryotic mRNAs in that they do not end with a poly-A tail but a stem-loop. May participate in circularizing those mRNAs specifically enhancing their translation. This Danio rerio (Zebrafish) protein is MIF4G domain-containing protein B (mif4gdb).